Here is a 457-residue protein sequence, read N- to C-terminus: UDP-N-acetylglucosamine 1-carboxyvinyltransferase (457 aa).

34 to 35 lines the phosphoenolpyruvate pocket; it reads KN. Residue arginine 104 participates in UDP-N-acetyl-alpha-D-glucosamine binding. The active-site Proton donor is cysteine 128. Cysteine 128 is modified (2-(S-cysteinyl)pyruvic acid O-phosphothioketal). Residues aspartate 319 and isoleucine 341 each coordinate UDP-N-acetyl-alpha-D-glucosamine. Residues 436–457 are disordered; that stretch reads INKSKNRSSNSKLKEVSEIRAA. The segment covering 447–457 has biased composition (basic and acidic residues); sequence KLKEVSEIRAA.

Belongs to the EPSP synthase family. MurA subfamily.

The protein resides in the cytoplasm. The catalysed reaction is phosphoenolpyruvate + UDP-N-acetyl-alpha-D-glucosamine = UDP-N-acetyl-3-O-(1-carboxyvinyl)-alpha-D-glucosamine + phosphate. The protein operates within cell wall biogenesis; peptidoglycan biosynthesis. Its function is as follows. Cell wall formation. Adds enolpyruvyl to UDP-N-acetylglucosamine. The sequence is that of UDP-N-acetylglucosamine 1-carboxyvinyltransferase from Prochlorococcus marinus subsp. pastoris (strain CCMP1986 / NIES-2087 / MED4).